A 191-amino-acid polypeptide reads, in one-letter code: Peptide methionine sulfoxide reductase MsrA (191 aa).

Cys21 is a catalytic residue.

Belongs to the MsrA Met sulfoxide reductase family.

The enzyme catalyses L-methionyl-[protein] + [thioredoxin]-disulfide + H2O = L-methionyl-(S)-S-oxide-[protein] + [thioredoxin]-dithiol. It catalyses the reaction [thioredoxin]-disulfide + L-methionine + H2O = L-methionine (S)-S-oxide + [thioredoxin]-dithiol. In terms of biological role, has an important function as a repair enzyme for proteins that have been inactivated by oxidation. Catalyzes the reversible oxidation-reduction of methionine sulfoxide in proteins to methionine. The chain is Peptide methionine sulfoxide reductase MsrA from Ralstonia nicotianae (strain ATCC BAA-1114 / GMI1000) (Ralstonia solanacearum).